An 890-amino-acid chain; its full sequence is Genome polyprotein 2 (890 aa).

A Peptidase C6 domain is found at 135 to 255 (AFNFAHGYCY…NSDLLNGIVG (121 aa)). Active-site for helper component proteinase activity residues include Cys143 and His215. The interval 506 to 533 (FTTSGDDDSPPPPGDSPSRPPGRSPDRV) is disordered. Positions 515–528 (PPPPGDSPSRPPGR) are enriched in pro residues. The stretch at 788–816 (ELVQRSMTKLDKEIELFQAQIDSQRRAVT) forms a coiled coil.

This sequence belongs to the bymoviruses polyprotein 2 family. In terms of processing, the viral RNA2 of bymoviruses is expressed as a single polyprotein which undergoes post-translational proteolytic processing resulting in the production of at least two individual proteins. The HC-pro cleaves its C-terminus autocatalytically (Potential).

The enzyme catalyses Hydrolyzes a Gly-|-Gly bond at its own C-terminus, commonly in the sequence -Tyr-Xaa-Val-Gly-|-Gly, in the processing of the potyviral polyprotein.. The sequence is that of Genome polyprotein 2 from Hordeum vulgare (Barley).